The sequence spans 483 residues: Probable cytosol aminopeptidase (483 aa).

Mn(2+)-binding residues include lysine 252 and aspartate 257. Lysine 264 is a catalytic residue. Mn(2+) contacts are provided by aspartate 275, aspartate 334, and glutamate 336. The active site involves arginine 338.

This sequence belongs to the peptidase M17 family. The cofactor is Mn(2+).

The protein resides in the cytoplasm. It carries out the reaction Release of an N-terminal amino acid, Xaa-|-Yaa-, in which Xaa is preferably Leu, but may be other amino acids including Pro although not Arg or Lys, and Yaa may be Pro. Amino acid amides and methyl esters are also readily hydrolyzed, but rates on arylamides are exceedingly low.. The catalysed reaction is Release of an N-terminal amino acid, preferentially leucine, but not glutamic or aspartic acids.. Presumably involved in the processing and regular turnover of intracellular proteins. Catalyzes the removal of unsubstituted N-terminal amino acids from various peptides. This Legionella pneumophila (strain Paris) protein is Probable cytosol aminopeptidase.